Consider the following 367-residue polypeptide: Cyclin-D3-2 (367 aa).

The segment covering 324–335 has biased composition (low complexity); sequence STTASVSSSSSS. Residues 324-347 are disordered; sequence STTASVSSSSSSPEPLLKRRRVQE.

This sequence belongs to the cyclin family. Cyclin D subfamily. Interacts with CDKA-1. In terms of tissue distribution, expressed in developing vegetative and floral primordia.

In terms of biological role, promotes divisions in the guard cells (GCs) after the guard mother cells (GMC) symmetric division when in the presence of CDKA-1. This is Cyclin-D3-2 (CYCD3-2) from Arabidopsis thaliana (Mouse-ear cress).